A 372-amino-acid chain; its full sequence is Probable inactive receptor-like protein kinase At1g65250 (372 aa).

Residues 1 to 4 (MGWL) and K38 each bind ATP. Residues 1–314 (MGWLRKKKKP…QERCQMKAFL (314 aa)) enclose the Protein kinase domain. 2 positions are modified to phosphotyrosine: Y128 and Y221. Positions 348-372 (SSSLSSGQTQLDSAQDISSTVVLSN) are disordered. Over residues 354–372 (GQTQLDSAQDISSTVVLSN) the composition is skewed to polar residues.

It belongs to the protein kinase superfamily.

In Arabidopsis thaliana (Mouse-ear cress), this protein is Probable inactive receptor-like protein kinase At1g65250.